The following is a 448-amino-acid chain: Tubulin alpha-2 chain (448 aa).

Residues glutamine 11, glutamate 69, serine 138, glycine 142, threonine 143, threonine 177, asparagine 204, and asparagine 226 each contribute to the GTP site. Glutamate 69 lines the Mg(2+) pocket. Glutamate 252 is an active-site residue. The disordered stretch occupies residues 428–448; that stretch reads KDYEEVGADSNEGGEEEGEEY. Residues 429–448 show a composition bias toward acidic residues; it reads DYEEVGADSNEGGEEEGEEY.

This sequence belongs to the tubulin family. Dimer of alpha and beta chains. A typical microtubule is a hollow water-filled tube with an outer diameter of 25 nm and an inner diameter of 15 nM. Alpha-beta heterodimers associate head-to-tail to form protofilaments running lengthwise along the microtubule wall with the beta-tubulin subunit facing the microtubule plus end conferring a structural polarity. Microtubules usually have 13 protofilaments but different protofilament numbers can be found in some organisms and specialized cells. It depends on Mg(2+) as a cofactor. Post-translationally, undergoes a tyrosination/detyrosination cycle, the cyclic removal and re-addition of a C-terminal tyrosine residue. Expressed in intestine, pharyngeal muscle cells, and a subset of neurons.

It is found in the cytoplasm. It localises to the cytoskeleton. The enzyme catalyses GTP + H2O = GDP + phosphate + H(+). Its function is as follows. Tubulin is the major constituent of microtubules, a cylinder consisting of laterally associated linear protofilaments composed of alpha- and beta-tubulin heterodimers. Microtubules grow by the addition of GTP-tubulin dimers to the microtubule end, where a stabilizing cap forms. Below the cap, tubulin dimers are in GDP-bound state, owing to GTPase activity of alpha-tubulin. Required for the normal dynamic behavior of the non-centrosomal microtubules in the epidermal syncytium. Involved in the redistribution of microtubule end-binding protein EB1/ebp-2 caused by wounding. Required to modulate expression in the epidermis of antimicrobial peptides, such as nlp-29, after wounding, or fungal infection. This chain is Tubulin alpha-2 chain (tba-2), found in Caenorhabditis elegans.